The sequence spans 377 residues: MPEEKVATKKIKLSALCELCNGRKAVMKRPKNLQKLCKECFYNVFETEIHNTIADANLFQPGDKVAIGASGGKDSTVLASVLKTLNERYDYRLELVLLSIDEGIKGYRDDSLATVKRNQAQYNMALEIISYKDLYNWSMDEIVSCAGIRSSCTYCGVLRRQALDRGAAKLGINHVVTGHNADDMAETVLMNLLRGDTARLEKSCTILTQSTGSPIKRSKPFKYSYQKEIVLYAHYKKLDYFSTECSYAPEAFRGTARELLKSLEAIRPSCIMDIIYSGEHLALAPKKKRTQQYKNKKKTQVDNEHEINADGSITIGTREFKDGNRCENCGYLTSNKICKACVLLAGLEMNRAKVSVDNNTAVDGAAKLTKTLEQLSF.

Belongs to the TtcA family. CTU1/NCS6/ATPBD3 subfamily.

The protein resides in the cytoplasm. Its pathway is tRNA modification; 5-methoxycarbonylmethyl-2-thiouridine-tRNA biosynthesis. Its function is as follows. Plays a central role in 2-thiolation of mcm(5)S(2)U at tRNA wobble positions of tRNA(Lys), tRNA(Glu) and tRNA(Gln). Directly binds tRNAs and probably acts by catalyzing adenylation of tRNAs, an intermediate required for 2-thiolation. It is unclear whether it acts as a sulfurtransferase that transfers sulfur from thiocarboxylated URM1 onto the uridine of tRNAs at wobble position. Prior mcm(5) tRNA modification by the elongator complex is required for 2-thiolation. May also be involved in protein urmylation. The sequence is that of Cytoplasmic tRNA 2-thiolation protein 1 from Debaryomyces hansenii (strain ATCC 36239 / CBS 767 / BCRC 21394 / JCM 1990 / NBRC 0083 / IGC 2968) (Yeast).